A 264-amino-acid chain; its full sequence is Small ribosomal subunit protein uS3 (264 aa).

Residues 39–107 enclose the KH type-2 domain; the sequence is VREFLKKKLK…PVHVNIEEIR (69 aa). The tract at residues 211–264 is disordered; that stretch reads NDAPVVEEPQEERRKRPGRPEGRRREGEGRPGGQRRGAGAGGRRSGGADAKTGE. The span at 221-239 shows a compositional bias: basic and acidic residues; that stretch reads EERRKRPGRPEGRRREGEG. Residues 240-255 show a composition bias toward gly residues; sequence RPGGQRRGAGAGGRRS.

This sequence belongs to the universal ribosomal protein uS3 family. In terms of assembly, part of the 30S ribosomal subunit. Forms a tight complex with proteins S10 and S14.

Functionally, binds the lower part of the 30S subunit head. Binds mRNA in the 70S ribosome, positioning it for translation. The protein is Small ribosomal subunit protein uS3 of Ralstonia nicotianae (strain ATCC BAA-1114 / GMI1000) (Ralstonia solanacearum).